Consider the following 267-residue polypeptide: 3-methyl-2-oxobutanoate hydroxymethyltransferase (267 aa).

Mg(2+)-binding residues include Asp46 and Asp85. 3-methyl-2-oxobutanoate is bound by residues 46–47, Asp85, and Lys115; that span reads DS. Glu117 contacts Mg(2+). Glu184 functions as the Proton acceptor in the catalytic mechanism.

The protein belongs to the PanB family. As to quaternary structure, homodecamer; pentamer of dimers. Mg(2+) is required as a cofactor.

It localises to the cytoplasm. The enzyme catalyses 3-methyl-2-oxobutanoate + (6R)-5,10-methylene-5,6,7,8-tetrahydrofolate + H2O = 2-dehydropantoate + (6S)-5,6,7,8-tetrahydrofolate. Its pathway is cofactor biosynthesis; (R)-pantothenate biosynthesis; (R)-pantoate from 3-methyl-2-oxobutanoate: step 1/2. Catalyzes the reversible reaction in which hydroxymethyl group from 5,10-methylenetetrahydrofolate is transferred onto alpha-ketoisovalerate to form ketopantoate. This Syntrophotalea carbinolica (strain DSM 2380 / NBRC 103641 / GraBd1) (Pelobacter carbinolicus) protein is 3-methyl-2-oxobutanoate hydroxymethyltransferase.